We begin with the raw amino-acid sequence, 144 residues long: Vasopressin-neurophysin 2-copeptin (144 aa).

Cysteines 1 and 6 form a disulfide. A Glycine amide modification is found at Gly9. 7 cysteine pairs are disulfide-bonded: Cys22/Cys66, Cys25/Cys39, Cys33/Cys56, Cys40/Cys46, Cys73/Cys85, Cys79/Cys97, and Cys86/Cys91. Asn112 carries an N-linked (GlcNAc...) asparagine glycan.

It belongs to the vasopressin/oxytocin family. As to quaternary structure, interacts with vasopressin receptors V1bR/AVPR1B (Ki=85 pM), V1aR/AVPR1A (Ki=0.6 nM) and V2R/AVPR2 (Ki=4.9 nM). Interacts with oxytocin receptor (OXTR) (Ki=110 nM).

The protein resides in the secreted. Neurophysin 2 specifically binds vasopressin. Functionally, vasopressin has a direct antidiuretic action on the kidney, it also causes vasoconstriction of the peripheral vessels. Acts by binding to vasopressin receptors (V1bR/AVPR1B, V1aR/AVPR1A, and V2R/AVPR2). This Cavia porcellus (Guinea pig) protein is Vasopressin-neurophysin 2-copeptin (AVP).